We begin with the raw amino-acid sequence, 108 residues long: UPF0060 membrane protein YnfA (108 aa).

Over 1–5 the chain is Periplasmic; that stretch reads MIKTT. Residues 6-26 form a helical membrane-spanning segment; the sequence is LLFFATALCEIIGCFLPWLWL. Topologically, residues 27 to 30 are cytoplasmic; the sequence is KRNA. Residues 31–51 traverse the membrane as a helical segment; it reads SIWLLLPAGISLALFVWLLTL. The Periplasmic segment spans residues 52–60; it reads HPAASGRVY. A helical transmembrane segment spans residues 61 to 81; the sequence is AAYGGVYVCTALIWLRVVDGV. Residues 82 to 84 lie on the Cytoplasmic side of the membrane; the sequence is KLT. A helical transmembrane segment spans residues 85–105; sequence LYDWTGALIALCGMLIIVAGW. Residues 106-108 are Periplasmic-facing; it reads GRT.

Belongs to the UPF0060 family.

The protein localises to the cell inner membrane. The protein is UPF0060 membrane protein YnfA of Escherichia coli O127:H6 (strain E2348/69 / EPEC).